The following is a 66-amino-acid chain: uncharacterized protein (66 aa).

Residues 1–20 (MTIINSISNFGSNNSFSNNN) are compositionally biased toward low complexity. The interval 1–47 (MTIINSISNFGSNNSFSNNNTVNQKSVIKRSKQMKNDNTSIGSSFKN) is disordered. The segment covering 36–47 (NDNTSIGSSFKN) has biased composition (polar residues).

This is an uncharacterized protein from Dictyostelium discoideum (Social amoeba).